The chain runs to 267 residues: Hydroxynaphthalene reductase-like protein Arp2 (267 aa).

NADP(+) contacts are provided by I25, N45, D71, and N98. Residues S147 and S148 each act as proton donor in the active site. NADP(+) is bound by residues Y162, K166, V195, and T197. The Proton acceptor role is filled by Y162. The Lowers pKa of active site Tyr role is filled by K166.

This sequence belongs to the short-chain dehydrogenases/reductases (SDR) family.

In terms of biological role, hydroxynaphthalene reductase-like protein; part of the Pks2 gene cluster that mediates the formation of infectious structures (appressoria), enabling these fungi to kill insects faster. The product of the Pks2 gene cluster is different from the one of Pks1 and has still not been identified. The sequence is that of Hydroxynaphthalene reductase-like protein Arp2 from Metarhizium acridum (strain CQMa 102).